A 363-amino-acid polypeptide reads, in one-letter code: Flagellar P-ring protein (363 aa).

The N-terminal stretch at 1–20 (MKLKLFLLSVLLLVSGSSQA) is a signal peptide.

The protein belongs to the FlgI family. In terms of assembly, the basal body constitutes a major portion of the flagellar organelle and consists of four rings (L,P,S, and M) mounted on a central rod.

It is found in the periplasm. Its subcellular location is the bacterial flagellum basal body. Assembles around the rod to form the L-ring and probably protects the motor/basal body from shearing forces during rotation. The protein is Flagellar P-ring protein of Shewanella woodyi (strain ATCC 51908 / MS32).